Consider the following 446-residue polypeptide: BAG family molecular chaperone regulator 7 (446 aa).

Residues 230 to 252 (TGGEKKKKHEEKEKKEKIETKSK) are disordered. Residues 239-250 (EEKEKKEKIETK) show a composition bias toward basic and acidic residues. Positions 303-332 (PEYAAVMIQRAFKAYLIRRSKSLRALRDLA) constitute an IQ domain. The 78-residue stretch at 330–407 (DLAIAKTKLK…AMLDVVDPQP (78 aa)) folds into the BAG domain. A Phosphothreonine modification is found at Thr443.

In terms of assembly, binds to the ATPase domain of HSP70/HSC70 chaperones. Interacts with HSP70-11/BIP2.

It localises to the endoplasmic reticulum. Functionally, co-chaperone that regulates diverse cellular pathways, such as programmed cell death and stress responses. Necessary for the proper maintenance of the unfolded protein response (UPR) during heat and cold tolerance. This is BAG family molecular chaperone regulator 7 (BAG7) from Arabidopsis thaliana (Mouse-ear cress).